Here is a 122-residue protein sequence, read N- to C-terminus: Basic phospholipase A2 vipoxin B chain (122 aa).

Disulfide bonds link Cys26/Cys115, Cys28/Cys44, Cys43/Cys95, Cys49/Cys122, Cys50/Cys88, Cys57/Cys81, and Cys75/Cys86. Residues Tyr27, Gly29, and Gly31 each coordinate Ca(2+). The active site involves His47. Asp48 contributes to the Ca(2+) binding site. Asp89 is a catalytic residue.

Belongs to the phospholipase A2 family. Group II subfamily. D49 sub-subfamily. In terms of assembly, heterodimer of A (AC P04084) and B chains; non-covalently linked. The A chain (acidic) is non-toxic, and increases the toxicity of the B chain (basic). The A chain may act as factor stabilizing the complex structure and hence retaining its toxicity by preventing non-specific binding. Upon binding to the target membranes the A chain is postulated to dissociate. Requires Ca(2+) as cofactor. As to expression, expressed by the venom gland.

The protein localises to the secreted. The catalysed reaction is a 1,2-diacyl-sn-glycero-3-phosphocholine + H2O = a 1-acyl-sn-glycero-3-phosphocholine + a fatty acid + H(+). Its function is as follows. Heterodimer: postsynaptic neurotoxin. Monomer: snake venom phospholipase A2 (PLA2) that shows hemolytic activity and inhibition of platelet aggregation. The hemolytic activity occurs only in presence of fatty acids (unsaturated fatty acids facilitate induce a strong hemolytic activity, whereas saturated fatty acids induce a slight activity). The inhibition of platelet aggregation is almost maximal when aggregation is induced by collagen, and arachidonic acid, whereas it is only of 30% when the aggregation is induced by ADP. PLA2 catalyzes the calcium-dependent hydrolysis of the 2-acyl groups in 3-sn-phosphoglycerides. This is Basic phospholipase A2 vipoxin B chain from Vipera ammodytes meridionalis (Eastern sand viper).